The chain runs to 178 residues: Cyclin-dependent kinase inhibitor 1B (178 aa).

The segment covering M1–P11 has biased composition (polar residues). The disordered stretch occupies residues M1–N31. Phosphoserine; by UHMK1 is present on S10. Residues D51–P91 are interaction with CDK2. Position 74 is a phosphotyrosine; by SRC (Y74). Residues F87–S178 form a disordered region. Y88 bears the Phosphotyrosine; by ABL, LYN, SRC and JAK2 mark. Y89 carries the post-translational modification Phosphotyrosine. Polar residues predominate over residues Q104–R113. The segment covering E126–T137 has biased composition (basic and acidic residues). Residues K153–R169 carry the Nuclear localization signal motif. A Phosphothreonine; by CaMK1, PKB/AKT1, RPS6KA1, RPS6KA3 and PIM1 modification is found at T157. Phosphothreonine is present on T170.

This sequence belongs to the CDI family. As to quaternary structure, forms a ternary complex composed of CCNE1, CDK2 and CDKN1B. Interacts directly with CCNE1; the interaction is inhibited by CDK2-dependent phosphorylation. Interacts with COPS5, subunit of the COP9 signalosome complex; the interaction leads to CDKN1B degradation. Interacts with NUP50; the interaction leads to nuclear import and degradation of phosphorylated CDKN1B. Interacts with CCND1 and SNX6. Interacts (Thr-198-phosphorylated form) with 14-3-3 proteins, binds strongly YWHAQ, weakly YWHAE and YWHAH, but not YWHAB nor YWHAZ; the interaction with YWHAQ results in translocation to the cytoplasm. Interacts with AKT1 and LYN; the interactions lead to cytoplasmic mislocation, phosphorylation of CDKN1B and inhibition of cell cycle arrest. Forms a ternary complex with CCNA2 and CDK2; CDKN1B inhibits the kinase activity of CDK2 through conformational rearrangements. Interacts (unphosphorylated form) with CDK2. Forms a complex with CDK2 and SPDYA, but does not directly interact with SPDYA. Forms a ternary complex composed of cyclin D, CDK4 and CDKN1B. Interacts (phosphorylated on Tyr-88 and Tyr-89) with CDK4; the interaction is required for cyclin D and CDK4 complex assembly, induces nuclear translocation and activates the CDK4 kinase activity. Interacts with GRB2. Interacts with PIM1. Identified in a complex with SKP1, SKP2 and CKS1B. Interacts with UHMK1; the interaction leads to cytoplasmic mislocation, phosphorylation of CDKN1B and inhibition of cell cycle arrest. Also interacts with CDK1. Dephosphorylated by PPM1H, leading to CDKN1B stability. In terms of processing, phosphorylated; phosphorylation occurs on serine, threonine and tyrosine residues. Phosphorylation on Ser-10 is the major site of phosphorylation in resting cells, takes place at the G(0)-G(1) phase and leads to protein stability. Phosphorylation on other sites is greatly enhanced by mitogens, growth factors, MYC and in certain cancer cell lines. The phosphorylated form found in the cytoplasm is inactivate. Phosphorylation on Tyr-88 has no effect on binding CDK complexes. Post-translationally, ubiquitinated; in the cytoplasm by the KPC complex (composed of RNF123/KPC1 and UBAC1/KPC2) and, in the nucleus, by SCF(SKP2). The latter requires prior phosphorylation on Thr-187. Ubiquitinated; by a TRIM21-containing SCF(SKP2)-like complex; leads to its degradation. Subject to degradation in the lysosome. Interaction with SNX6 promotes lysosomal degradation.

It is found in the nucleus. The protein localises to the cytoplasm. The protein resides in the endosome. Functionally, important regulator of cell cycle progression. Inhibits the kinase activity of CDK2 bound to cyclin A, but has little inhibitory activity on CDK2 bound to SPDYA. Involved in G1 arrest. Potent inhibitor of cyclin E- and cyclin A-CDK2 complexes. Forms a complex with cyclin type D-CDK4 complexes and is involved in the assembly, stability, and modulation of CCND1-CDK4 complex activation. Acts either as an inhibitor or an activator of cyclin type D-CDK4 complexes depending on its phosphorylation state and/or stoichometry. This chain is Cyclin-dependent kinase inhibitor 1B (CDKN1B), found in Neovison vison (American mink).